The chain runs to 233 residues: MSLLHQARFFITVNHLRDLPATAVPEVAFAGRSNAGKSTAINILCNQKRLAFSSKTPGRTQHINYFSVMPAKAEDPLGFLVDLPGYGYAEAPGETKSHWVHLLGDYVKARQQLAGLVIMMDARRPFTDLDCQMVEWFLPTGKPIHVLLTKADKLTNNDASRALMAARKVLADYRAQIDGDVSLTVQLFSSLKRRGIEEAQRIVAGWLCLPEALEAEPQAEPAKKTPSPNAQRG.

Residues 23 to 209 (AVPEVAFAGR…QRIVAGWLCL (187 aa)) form the EngB-type G domain. GTP-binding positions include 31 to 38 (GRSNAGKS), 58 to 62 (GRTQH), 82 to 85 (DLPG), 149 to 152 (TKAD), and 188 to 190 (FSS). Mg(2+) contacts are provided by S38 and T60.

This sequence belongs to the TRAFAC class TrmE-Era-EngA-EngB-Septin-like GTPase superfamily. EngB GTPase family. It depends on Mg(2+) as a cofactor.

In terms of biological role, necessary for normal cell division and for the maintenance of normal septation. This Ralstonia pickettii (strain 12J) protein is Probable GTP-binding protein EngB.